We begin with the raw amino-acid sequence, 2837 residues long: Bifunctional DNA-directed RNA polymerase subunit beta-beta' (2837 aa).

The segment at 1–1433 (MVDSSYMYAS…CLNVDLKQND (1433 aa)) is DNA-directed RNA polymerase subunit beta. Positions 1436-2837 (IEDISHTNIA…ESVVAYDQSN (1402 aa)) are DNA-directed RNA polymerase subunit beta'. Zn(2+)-binding residues include Cys-1501, Cys-1503, Cys-1516, and Cys-1519. Residues Asp-1893, Asp-1895, and Asp-1897 each contribute to the Mg(2+) site. 4 residues coordinate Zn(2+): Cys-2235, Cys-2309, Cys-2316, and Cys-2319.

In the N-terminal section; belongs to the RNA polymerase beta chain family. It in the C-terminal section; belongs to the RNA polymerase beta' chain family. The RNAP catalytic core consists of 2 alpha, 1 beta/beta' and 1 omega subunit. When a sigma factor is associated with the core the holoenzyme is formed, which can initiate transcription. The cofactor is Mg(2+). Requires Zn(2+) as cofactor.

The enzyme catalyses RNA(n) + a ribonucleoside 5'-triphosphate = RNA(n+1) + diphosphate. In terms of biological role, DNA-dependent RNA polymerase catalyzes the transcription of DNA into RNA using the four ribonucleoside triphosphates as substrates. The chain is Bifunctional DNA-directed RNA polymerase subunit beta-beta' (rpoBC) from Wolbachia pipientis wMel.